A 443-amino-acid polypeptide reads, in one-letter code: ATP-dependent protease ATPase subunit HslU (443 aa).

Residues I18, 60-65 (GVGKTE), D256, E321, and R393 each bind ATP.

Belongs to the ClpX chaperone family. HslU subfamily. A double ring-shaped homohexamer of HslV is capped on each side by a ring-shaped HslU homohexamer. The assembly of the HslU/HslV complex is dependent on binding of ATP.

The protein resides in the cytoplasm. In terms of biological role, ATPase subunit of a proteasome-like degradation complex; this subunit has chaperone activity. The binding of ATP and its subsequent hydrolysis by HslU are essential for unfolding of protein substrates subsequently hydrolyzed by HslV. HslU recognizes the N-terminal part of its protein substrates and unfolds these before they are guided to HslV for hydrolysis. The chain is ATP-dependent protease ATPase subunit HslU from Photorhabdus laumondii subsp. laumondii (strain DSM 15139 / CIP 105565 / TT01) (Photorhabdus luminescens subsp. laumondii).